The following is a 1187-amino-acid chain: MDCSLLRTLVRRYCAGEENWVDSRTIYVGHKEPPPGAEAYIPQRYPDNRIVSSKYTFWNFIPKNLFEQFRRIANFYFLIIFLVQLIIDTPTSPVTSGLPLFFVITVTAIKQGYEDWLRHKADNAMNQCPVHFIQHGKLVRKQSRKLRVGDIVMVKEDETFPCDLIFLSSNRADGTCHVTTASLDGESSHKTHYAVQDTKGFHTEADVDSLHATIECEQPQPDLYKFVGRINVYNDLNDPVVRPLGSENLLLRGATLKNTEKIFGVAIYTGMETKMALNYQSKSQKRSAVEKSMNTFLIVYLCILVSKALINTVLKYVWQSEPFRDEPWYNEKTESERQRNLFLRAFTDFLAFMVLFNYIIPVSMYVTVEMQKFLGSYFITWDEDMFDEEMGEGPLVNTSDLNEELGQVEYIFTDKTGTLTENNMAFKECCIEGHVYVPHVICNGQVLPDSSGIDMIDSSPGVCGREREELFFRAICLCHTVQVKDDHCGDDVDGPQKSPDAKSCVYISSSPDEVALVEGVQRLGFTYLRLKDNYMEILNRENDIERFELLEVLTFDSVRRRMSVIVKSTTGEIYLFCKGADSSIFPRVIEGKVDQVRSRVERNAVEGLRTLCVAYKRLEPEQYEDACRLLQSAKVALQDREKKLAEAYEQIEKDLVLLGATAVEDRLQEKAADTIEALQKAGIKVWVLTGDKMETASATCYACKLFRRSTQLLELTTKKLEEQSLHDVLFDLSKTVLRCSGSMTRDSFSGLSTDMHDYGLIIDGAALSLIMKPREDGSSSGNYRELFLEICRNCSAVLCCRMAPLQKAQIVKLIKFSKEHPITLAIGDGANDVSMILEAHVGIGVIGKEGRQAARNSDYAIPKFKHLKKMLLVHGHFYYIRISELVQYFFYKNVCFIFPQFLYQFFCGFSQQTLYDTAYLTLYNISFTSLPILLYSLMEQHVGIDVLKRDPTLYRDIAKNALLRWRVFIYWTFLGVFDALVFFFGAYFIFENTTVTINGQMFGNWTFGTLVFTVMVLTVTLKLALDTHYWTWINHFVIWGSLLFYIAFSLLWGGVIWPFLSYQRMYYVFISMLSSGPAWLGIILLVTVGLLPDVLKKVLCRQLWPTATERTQNIQHQDSISEFTPLASLPSWGAQGSRLLAAQCSSPSGRVVCSRWESEECPVLPLHPGLPHKARYGCCRSSLEMPT.

Residues 1–61 lie on the Cytoplasmic side of the membrane; that stretch reads MDCSLLRTLV…SSKYTFWNFI (61 aa). The chain crosses the membrane as a helical span at residues 62–82; it reads PKNLFEQFRRIANFYFLIIFL. Topologically, residues 83–88 are extracellular; sequence VQLIID. A helical membrane pass occupies residues 89-110; sequence TPTSPVTSGLPLFFVITVTAIK. The Cytoplasmic portion of the chain corresponds to 111-296; the sequence is QGYEDWLRHK…SAVEKSMNTF (186 aa). The chain crosses the membrane as a helical span at residues 297-318; it reads LIVYLCILVSKALINTVLKYVW. Residues 319–349 are Extracellular-facing; it reads QSEPFRDEPWYNEKTESERQRNLFLRAFTDF. The helical transmembrane segment at 350–372 threads the bilayer; sequence LAFMVLFNYIIPVSMYVTVEMQK. Residues 373-884 lie on the Cytoplasmic side of the membrane; that stretch reads FLGSYFITWD…GHFYYIRISE (512 aa). Residue D414 is the 4-aspartylphosphate intermediate of the active site. Positions 414, 415, 416, 513, 555, 578, 609, 689, 690, and 691 each coordinate ATP. Mg(2+) is bound at residue D414. T416 provides a ligand contact to Mg(2+). Phosphoserine is present on S740. Positions 801 and 807 each coordinate ATP. Mg(2+) is bound at residue D828. Positions 831 and 832 each coordinate ATP. Residue D832 coordinates Mg(2+). A helical transmembrane segment spans residues 885–905; it reads LVQYFFYKNVCFIFPQFLYQF. Over 906-917 the chain is Extracellular; sequence FCGFSQQTLYDT. A helical transmembrane segment spans residues 918-937; sequence AYLTLYNISFTSLPILLYSL. Over 938 to 967 the chain is Cytoplasmic; that stretch reads MEQHVGIDVLKRDPTLYRDIAKNALLRWRV. The helical transmembrane segment at 968-989 threads the bilayer; sequence FIYWTFLGVFDALVFFFGAYFI. Over 990–1003 the chain is Extracellular; it reads FENTTVTINGQMFG. A helical transmembrane segment spans residues 1004-1026; sequence NWTFGTLVFTVMVLTVTLKLALD. At 1027-1032 the chain is on the cytoplasmic side; sequence THYWTW. The chain crosses the membrane as a helical span at residues 1033–1053; it reads INHFVIWGSLLFYIAFSLLWG. Residues 1054–1071 are Extracellular-facing; that stretch reads GVIWPFLSYQRMYYVFIS. The helical transmembrane segment at 1072-1096 threads the bilayer; that stretch reads MLSSGPAWLGIILLVTVGLLPDVLK. At 1097-1138 the chain is on the cytoplasmic side; it reads KVLCRQLWPTATERTQNIQHQDSISEFTPLASLPSWGAQGSR. Residues S1148 and S1158 each carry the phosphoserine modification.

Belongs to the cation transport ATPase (P-type) (TC 3.A.3) family. Type IV subfamily. In terms of assembly, component of a P4-ATPase flippase complex which consists of a catalytic alpha subunit ATP11A and an accessory beta subunit TMEM30A. Requires Mg(2+) as cofactor. In terms of processing, proteolytically cleaved by CASP3. As to expression, widely expressed. Expressed in myoblasts. Expressed in retina, brain, liver, testes and kidney (at protein level). Expressed in the inner ear.

Its subcellular location is the cell membrane. The protein resides in the early endosome. It localises to the recycling endosome. The protein localises to the endoplasmic reticulum membrane. It carries out the reaction ATP + H2O + phospholipidSide 1 = ADP + phosphate + phospholipidSide 2.. The enzyme catalyses a 1,2-diacyl-sn-glycero-3-phospho-L-serine(out) + ATP + H2O = a 1,2-diacyl-sn-glycero-3-phospho-L-serine(in) + ADP + phosphate + H(+). The catalysed reaction is a 1,2-diacyl-sn-glycero-3-phosphoethanolamine(out) + ATP + H2O = a 1,2-diacyl-sn-glycero-3-phosphoethanolamine(in) + ADP + phosphate + H(+). In terms of biological role, catalytic component of a P4-ATPase flippase complex which catalyzes the hydrolysis of ATP coupled to the transport of aminophospholipids, phosphatidylserines (PS) and phosphatidylethanolamines (PE), from the outer to the inner leaflet of the plasma membrane. Does not show flippase activity toward phosphatidylcholine (PC). Contributes to the maintenance of membrane lipid asymmetry with a specific role in morphogenesis of muscle cells. In myoblasts, mediates PS enrichment at the inner leaflet of plasma membrane, triggering PIEZO1-dependent Ca2+ influx and Rho GTPases signal transduction, subsequently leading to the assembly of cortical actomyosin fibers and myotube formation. The protein is Phospholipid-transporting ATPase IH (Atp11a) of Mus musculus (Mouse).